Here is a 138-residue protein sequence, read N- to C-terminus: UPF0251 protein Dole_1957 (138 aa).

Belongs to the UPF0251 family.

This is UPF0251 protein Dole_1957 from Desulfosudis oleivorans (strain DSM 6200 / JCM 39069 / Hxd3) (Desulfococcus oleovorans).